Consider the following 238-residue polypeptide: Probable transcriptional regulatory protein SGO_0454 (238 aa).

This sequence belongs to the TACO1 family. YeeN subfamily.

It localises to the cytoplasm. In Streptococcus gordonii (strain Challis / ATCC 35105 / BCRC 15272 / CH1 / DL1 / V288), this protein is Probable transcriptional regulatory protein SGO_0454.